The sequence spans 364 residues: Cobalt-precorrin-5B C(1)-methyltransferase (364 aa).

The protein belongs to the CbiD family.

It carries out the reaction Co-precorrin-5B + S-adenosyl-L-methionine = Co-precorrin-6A + S-adenosyl-L-homocysteine. It functions in the pathway cofactor biosynthesis; adenosylcobalamin biosynthesis; cob(II)yrinate a,c-diamide from sirohydrochlorin (anaerobic route): step 6/10. In terms of biological role, catalyzes the methylation of C-1 in cobalt-precorrin-5B to form cobalt-precorrin-6A. This chain is Cobalt-precorrin-5B C(1)-methyltransferase, found in Pseudomonas putida (strain W619).